Consider the following 322-residue polypeptide: Lipoyl synthase (322 aa).

Positions 69, 74, 80, 95, 99, 102, and 309 each coordinate [4Fe-4S] cluster. One can recognise a Radical SAM core domain in the interval 81 to 298 (FNHGTATFMI…GVKAKALGFD (218 aa)).

The protein belongs to the radical SAM superfamily. Lipoyl synthase family. [4Fe-4S] cluster serves as cofactor.

The protein localises to the cytoplasm. The enzyme catalyses [[Fe-S] cluster scaffold protein carrying a second [4Fe-4S](2+) cluster] + N(6)-octanoyl-L-lysyl-[protein] + 2 oxidized [2Fe-2S]-[ferredoxin] + 2 S-adenosyl-L-methionine + 4 H(+) = [[Fe-S] cluster scaffold protein] + N(6)-[(R)-dihydrolipoyl]-L-lysyl-[protein] + 4 Fe(3+) + 2 hydrogen sulfide + 2 5'-deoxyadenosine + 2 L-methionine + 2 reduced [2Fe-2S]-[ferredoxin]. It participates in protein modification; protein lipoylation via endogenous pathway; protein N(6)-(lipoyl)lysine from octanoyl-[acyl-carrier-protein]: step 2/2. Functionally, catalyzes the radical-mediated insertion of two sulfur atoms into the C-6 and C-8 positions of the octanoyl moiety bound to the lipoyl domains of lipoate-dependent enzymes, thereby converting the octanoylated domains into lipoylated derivatives. The chain is Lipoyl synthase from Psychromonas ingrahamii (strain DSM 17664 / CCUG 51855 / 37).